The chain runs to 412 residues: MRSAPTARAALVLCAATAGLLSAQGSPEPPEAPRFASWDEVNVLAHGLLQLGRGLREHVERTRGQLGALERRLSACGAACKDPEGSAVPPLTAGNLVPSQSDAAPETLHSLQTQLKAQNSKIQQLFQKVAQQQRHLEKQHLRIQNLQGQLDHLAPMHLGHGVAKAARRKRLPKMTQPAGPAHNISRLHRLPRDCQELFEEGERQSGLFQIQPQGSPPFLVNCKMTSDGGWTVIQRRQDGSVDFNQPWEAYKDGFGDPKGEFWLGLEKVHRIMGDRGSRLAVQLQDWEGNAESLQFPVHLGGEDTAYSLQLTAPVASKLGATIDTPSGLSLPFSTWDQDHDLRGDKNCAKILSGGWWFGTCSHSNLNGQYFHSIPRQREQRKKGIFWKTWRGRYYPLQATTMLIQPTVAEAAS.

A signal peptide spans methionine 1–alanine 23. A coiled-coil region spans residues glutamate 106–leucine 153. N-linked (GlcNAc...) asparagine glycosylation is present at asparagine 183. The 223-residue stretch at serine 185–valine 407 folds into the Fibrinogen C-terminal domain. Intrachain disulfides connect cysteine 194–cysteine 222 and cysteine 347–cysteine 360.

In terms of assembly, homooligomer; disulfide-linked via Cys residues in the N-terminal part of the protein. The homooligomer undergoes proteolytic processing to release the ANGPTL4 C-terminal chain, which circulates as a monomer. The homooligomer unprocessed form is able to interact with the extracellular matrix. N-glycosylated. In terms of processing, forms disulfide-linked dimers and tetramers. Post-translationally, cleaved into a smaller N-terminal chain and a larger chain that contains the fibrinogen C-terminal domain; both cleaved and uncleaved forms are detected in the extracellular space. The cleaved form is not present within the cell.

The protein resides in the secreted. Its subcellular location is the extracellular space. It is found in the extracellular matrix. Mediates inactivation of the lipoprotein lipase LPL, and thereby plays a role in the regulation of triglyceride clearance from the blood serum and in lipid metabolism. May also play a role in regulating glucose homeostasis and insulin sensitivity. Inhibits proliferation, migration, and tubule formation of endothelial cells and reduces vascular leakage. Upon heterologous expression, inhibits the adhesion of endothelial cell to the extracellular matrix (ECM), and inhibits the reorganization of the actin cytoskeleton, formation of actin stress fibers and focal adhesions in endothelial cells that have adhered to ANGPTL4-containing ECM (in vitro). Depending on context, may modulate tumor-related angiogenesis. In terms of biological role, mediates inactivation of the lipoprotein lipase LPL, and thereby plays an important role in the regulation of triglyceride clearance from the blood serum and in lipid metabolism. Has higher activity in LPL inactivation than the uncleaved protein. The sequence is that of Angiopoietin-related protein 4 (ANGPTL4) from Sus scrofa (Pig).